We begin with the raw amino-acid sequence, 189 residues long: UPF0301 protein CAB604 (189 aa).

Belongs to the UPF0301 (AlgH) family.

This chain is UPF0301 protein CAB604, found in Chlamydia abortus (strain DSM 27085 / S26/3) (Chlamydophila abortus).